A 141-amino-acid polypeptide reads, in one-letter code: Nucleoside triphosphatase NudI (141 aa).

Residues 1 to 141 (MRQRTIVCPL…RKTLSLKGLL (141 aa)) form the Nudix hydrolase domain. Positions 38-59 (GGVEPGERIEDALRREIREELG) match the Nudix box motif.

Belongs to the Nudix hydrolase family. NudI subfamily. As to quaternary structure, monomer. The cofactor is Mg(2+).

The enzyme catalyses a ribonucleoside 5'-triphosphate + H2O = a ribonucleoside 5'-phosphate + diphosphate + H(+). The catalysed reaction is a 2'-deoxyribonucleoside 5'-triphosphate + H2O = a 2'-deoxyribonucleoside 5'-phosphate + diphosphate + H(+). It carries out the reaction dUTP + H2O = dUMP + diphosphate + H(+). It catalyses the reaction dTTP + H2O = dTMP + diphosphate + H(+). The enzyme catalyses dCTP + H2O = dCMP + diphosphate + H(+). In terms of biological role, catalyzes the hydrolysis of nucleoside triphosphates, with a preference for pyrimidine deoxynucleoside triphosphates (dUTP, dTTP and dCTP). This chain is Nucleoside triphosphatase NudI, found in Escherichia fergusonii (strain ATCC 35469 / DSM 13698 / CCUG 18766 / IAM 14443 / JCM 21226 / LMG 7866 / NBRC 102419 / NCTC 12128 / CDC 0568-73).